Reading from the N-terminus, the 352-residue chain is MAIRVLIVDDSATARTVLKDVLSKDSEIEVIATAPDAYVARDKIVQLKPDVICLDVEMPRMDGISFLKKIMKYFPTPVLMVSSLTQDGAQVTFDALEAGAIDYVAKPHSNIYDGIDEIQKELIQKVKMVASSNLSARIEAAKAKTSTLEYKPKATYSLAQTTNKLIAIGASTGGTVALAELIARFTKDTPGVVVVQHMPSGFTNSFAQRLNSLCEVEVKEAEDGDIIGRGRVLVAPGDLHMVVRRDGGNYRVKLGTGEKISGHRPSVDVLFNSVASHVGSNAIGVLLTGMGSDGAKGMLKMKTSGASTIAQDEKSSIVWGMPKVAYEIGAVDFVEPLSNIDVKIASLLSERK.

Residues 4–121 (RVLIVDDSAT…YDGIDEIQKE (118 aa)) enclose the Response regulatory domain. Residue aspartate 55 is modified to 4-aspartylphosphate. The CheB-type methylesterase domain maps to 159 to 351 (AQTTNKLIAI…VKIASLLSER (193 aa)). Active-site residues include serine 171, histidine 197, and aspartate 293.

It belongs to the CheB family. In terms of processing, phosphorylated by CheA. Phosphorylation of the N-terminal regulatory domain activates the methylesterase activity.

Its subcellular location is the cytoplasm. The enzyme catalyses [protein]-L-glutamate 5-O-methyl ester + H2O = L-glutamyl-[protein] + methanol + H(+). It carries out the reaction L-glutaminyl-[protein] + H2O = L-glutamyl-[protein] + NH4(+). Its function is as follows. Involved in chemotaxis. Part of a chemotaxis signal transduction system that modulates chemotaxis in response to various stimuli. Catalyzes the demethylation of specific methylglutamate residues introduced into the chemoreceptors (methyl-accepting chemotaxis proteins or MCP) by CheR. Also mediates the irreversible deamidation of specific glutamine residues to glutamic acid. The protein is Protein-glutamate methylesterase/protein-glutamine glutaminase of Sulfurimonas denitrificans (strain ATCC 33889 / DSM 1251) (Thiomicrospira denitrificans (strain ATCC 33889 / DSM 1251)).